The primary structure comprises 153 residues: MGCCCCLPSIPESSRTIDEHLPLSRATPSSLSNAYSSPLSPPIPLAITNINLQTSPPKLPRTQGNSSEASPGLTQVVPEKKTWHVDDLTDFELKKQYREAIDECPICLEEYEIDNPKLLTKCGHDFHLACILAWMERSEACPVCDKELVLTES.

Residues 104–145 (CPICLEEYEIDNPKLLTKCGHDFHLACILAWMERSEACPVCD) form an RING-type; atypical zinc finger.

It localises to the cytoplasm. The protein localises to the cytosol. The enzyme catalyses S-ubiquitinyl-[E2 ubiquitin-conjugating enzyme]-L-cysteine + [acceptor protein]-L-lysine = [E2 ubiquitin-conjugating enzyme]-L-cysteine + N(6)-ubiquitinyl-[acceptor protein]-L-lysine.. Possesses E3 ubiquitin-protein ligase activity in vitro when associated with the E2 enzyme UBC8 in vitro. Plays combinatory roles with AIRP2 in the positive regulation of the abscisic acid-mediated drought stress response. The protein is E3 ubiquitin-protein ligase AIRP1 of Arabidopsis thaliana (Mouse-ear cress).